Reading from the N-terminus, the 944-residue chain is Protein translocase subunit SecA (944 aa).

ATP contacts are provided by residues glutamine 77, 95 to 99 (GEGKT), and aspartate 484. Residues 920–944 (EQEKQTRKKKKKKPHEDESSKTKIG) form a disordered region. Residues 933–944 (PHEDESSKTKIG) show a composition bias toward basic and acidic residues.

The protein belongs to the SecA family. As to quaternary structure, monomer and homodimer. Part of the essential Sec protein translocation apparatus which comprises SecA, SecYEG and auxiliary proteins SecDF. Other proteins may also be involved.

It is found in the cell membrane. The protein resides in the cytoplasm. It catalyses the reaction ATP + H2O + cellular proteinSide 1 = ADP + phosphate + cellular proteinSide 2.. Part of the Sec protein translocase complex. Interacts with the SecYEG preprotein conducting channel. Has a central role in coupling the hydrolysis of ATP to the transfer of proteins into and across the cell membrane, serving as an ATP-driven molecular motor driving the stepwise translocation of polypeptide chains across the membrane. The sequence is that of Protein translocase subunit SecA from Mycoplasma mycoides subsp. mycoides SC (strain CCUG 32753 / NCTC 10114 / PG1).